Reading from the N-terminus, the 98-residue chain is Large ribosomal subunit protein uL23 (98 aa).

Belongs to the universal ribosomal protein uL23 family. In terms of assembly, part of the 50S ribosomal subunit. Contacts protein L29, and trigger factor when it is bound to the ribosome.

Its function is as follows. One of the early assembly proteins it binds 23S rRNA. One of the proteins that surrounds the polypeptide exit tunnel on the outside of the ribosome. Forms the main docking site for trigger factor binding to the ribosome. The sequence is that of Large ribosomal subunit protein uL23 from Koribacter versatilis (strain Ellin345).